The following is a 457-amino-acid chain: Exodeoxyribonuclease 7 large subunit (457 aa).

Belongs to the XseA family. Heterooligomer composed of large and small subunits.

The protein resides in the cytoplasm. It catalyses the reaction Exonucleolytic cleavage in either 5'- to 3'- or 3'- to 5'-direction to yield nucleoside 5'-phosphates.. Its function is as follows. Bidirectionally degrades single-stranded DNA into large acid-insoluble oligonucleotides, which are then degraded further into small acid-soluble oligonucleotides. This Escherichia coli O127:H6 (strain E2348/69 / EPEC) protein is Exodeoxyribonuclease 7 large subunit.